We begin with the raw amino-acid sequence, 624 residues long: 1-deoxy-D-xylulose-5-phosphate synthase (624 aa).

Residues His-74 and 115–117 (GHS) each bind thiamine diphosphate. A Mg(2+)-binding site is contributed by Asp-146. Thiamine diphosphate contacts are provided by residues 147-148 (GA), Asn-175, Tyr-286, and Glu-366. Position 175 (Asn-175) interacts with Mg(2+).

This sequence belongs to the transketolase family. DXPS subfamily. Homodimer. The cofactor is Mg(2+). Thiamine diphosphate serves as cofactor.

It carries out the reaction D-glyceraldehyde 3-phosphate + pyruvate + H(+) = 1-deoxy-D-xylulose 5-phosphate + CO2. It participates in metabolic intermediate biosynthesis; 1-deoxy-D-xylulose 5-phosphate biosynthesis; 1-deoxy-D-xylulose 5-phosphate from D-glyceraldehyde 3-phosphate and pyruvate: step 1/1. In terms of biological role, catalyzes the acyloin condensation reaction between C atoms 2 and 3 of pyruvate and glyceraldehyde 3-phosphate to yield 1-deoxy-D-xylulose-5-phosphate (DXP). This is 1-deoxy-D-xylulose-5-phosphate synthase from Clostridium kluyveri (strain NBRC 12016).